The primary structure comprises 257 residues: Putative hydro-lyase Bphy_2364 (257 aa).

It belongs to the D-glutamate cyclase family.

This is Putative hydro-lyase Bphy_2364 from Paraburkholderia phymatum (strain DSM 17167 / CIP 108236 / LMG 21445 / STM815) (Burkholderia phymatum).